Reading from the N-terminus, the 79-residue chain is Acyl carrier protein (79 aa).

The Carrier domain maps to 2-77 (SDIEARVKKI…NAVDYATKNQ (76 aa)). The residue at position 37 (serine 37) is an O-(pantetheine 4'-phosphoryl)serine.

Belongs to the acyl carrier protein (ACP) family. 4'-phosphopantetheine is transferred from CoA to a specific serine of apo-ACP by AcpS. This modification is essential for activity because fatty acids are bound in thioester linkage to the sulfhydryl of the prosthetic group.

The protein localises to the cytoplasm. It participates in lipid metabolism; fatty acid biosynthesis. Carrier of the growing fatty acid chain in fatty acid biosynthesis. This chain is Acyl carrier protein, found in Variovorax paradoxus (strain S110).